The sequence spans 402 residues: Zinc finger protein 322 (402 aa).

The C2H2-type 1; atypical zinc finger occupies 43-65; it reads YQCLECKQNFCENLALIMCERTH. 8 C2H2-type zinc fingers span residues 71–93, 99–121, 127–149, 155–177, 183–205, 211–233, 239–261, and 267–289; these read YKCDMCEKTFVQSSDLTSHQRIH, YKCSKCEKSFWHHLALSGHQRTH, YTCDICGKNFGQSSDLLVHQRSH, YLCSECDKCFSRSTNLIRHRRTH, FKCLECEKAFSGKSDLISHQRTH, YKCNKCEKSYRHRSAFIVHKRVH, YKCGACEKCFGQKSDLIVHQRVH, and YKCLECMRSFTRSANLIRHQATH. The C2H2-type 10; degenerate zinc finger occupies 293–315; that stretch reads FKCLEYEKSFNCSSDLIVHQRIH. A C2H2-type 11; degenerate zinc finger spans residues 351-373; sequence YKYTVCDKSFHQSSALLQHQTVH. A Phosphoserine modification is found at Ser391.

Belongs to the krueppel C2H2-type zinc-finger protein family. Interacts with POU5F1. In terms of tissue distribution, ubiquitous. Highly expressed in heart and skeletal muscle.

It localises to the cytoplasm. The protein resides in the nucleus. In terms of biological role, transcriptional activator. Important for maintenance of pluripotency in embryonic stem cells. Binds directly to the POU5F1 distal enhancer and the NANOG proximal promoter, and enhances expression of both genes. Can also bind to numerous other gene promoters and regulates expression of many other pluripotency factors, either directly or indirectly. Promotes inhibition of MAPK signaling during embryonic stem cell differentiation. The polypeptide is Zinc finger protein 322 (ZNF322) (Homo sapiens (Human)).